We begin with the raw amino-acid sequence, 190 residues long: Putative glutathione-dependent formaldehyde-activating enzyme (190 aa).

Positions 19–165 constitute a CENP-V/GFA domain; sequence FKGGKLYCHC…FRKVGLQPYD (147 aa). Zn(2+)-binding residues include cysteine 26, cysteine 28, cysteine 47, cysteine 49, cysteine 52, cysteine 94, and cysteine 97.

Belongs to the Gfa family. It depends on Zn(2+) as a cofactor.

The catalysed reaction is S-(hydroxymethyl)glutathione = glutathione + formaldehyde. The protein operates within one-carbon metabolism; formaldehyde degradation; formate from formaldehyde (glutathione route): step 1/3. Catalyzes the condensation of formaldehyde and glutathione to S-hydroxymethylglutathione. In Pyrenophora teres f. teres (strain 0-1) (Barley net blotch fungus), this protein is Putative glutathione-dependent formaldehyde-activating enzyme.